Reading from the N-terminus, the 342-residue chain is (Lyso)-N-acylphosphatidylethanolamine lipase (342 aa).

An AB hydrolase-1 domain is found at 70–201 (PLVMVHGFGG…KAVASVLGRS (132 aa)).

The protein belongs to the peptidase S33 family. ABHD4/ABHD5 subfamily.

The enzyme catalyses N-hexadecanoyl-1,2-di-(9Z-octadecenoyl)-sn-glycero-3-phosphoethanolamine + H2O = N-hexadecanoyl-1-(9Z-octadecenoyl)-sn-glycero-3-phosphoethanolamine + (9Z)-octadecenoate + H(+). It carries out the reaction an N-acyl-1,2-diacyl-sn-glycero-3-phosphoethanolamine + H2O = N,1-diacyl-sn-glycero-3-phosphoethanolamine + a fatty acid + H(+). It catalyses the reaction N-hexadecanoyl-1-(9Z-octadecenoyl)-sn-glycero-3-phosphoethanolamine + H2O = N-hexadecanoyl-sn-glycero-3-phosphoethanolamine + (9Z)-octadecenoate + H(+). The catalysed reaction is N-octadecanoyl-1-(9Z-octadecenoyl)-sn-glycero-3-phosphoethanolamine + H2O = N-octadecanoyl-sn-glycero-3-phospho-ethanolamine + (9Z)-octadecenoate + H(+). The enzyme catalyses N-eicosanoyl-1-(9Z-octadecenoyl)-sn-glycero-3-phosphoethanolamine + H2O = N-eicosanoyl-sn-glycero-3-phosphoethanolamine + (9Z)-octadecenoate + H(+). It carries out the reaction N,1-di-(9Z-octadecenoyl)-sn-glycero-3-phosphoethanolamine + H2O = N-(9Z-octadecenoyl)-sn-glycero-3-phosphoethanolamine + (9Z)-octadecenoate + H(+). It catalyses the reaction N-(5Z,8Z,11Z,14Z-eicosatetraenoyl)-1-(9Z-octadecenoyl)-sn-glycero-3-phosphoethanolamine + H2O = N-(5Z,8Z,11Z,14Z-eicosatetraenoyl)-sn-glycero-3-phosphoethanolamine + (9Z)-octadecenoate + H(+). The catalysed reaction is 1-octadecanoyl-2-(9Z-octadecenoyl)-sn-glycero-3-phospho-(N-hexadecanoyl)-serine + H2O = 1-octadecanoyl-2-hydroxy-sn-glycero-3-phospho-(N-hexadecanoyl)-serine + (9Z)-octadecenoate + H(+). The enzyme catalyses 1-O-(1Z-octadecenoyl)-2-(9Z-octadecenoyl)-sn-glycero-3-phospho-N-hexadecanoyl-ethanolamine + H2O = 1-O-(1Z-octadecenyl)-sn-glycero-3-phospho-N-hexadecanoyl-ethanolamine + (9Z)-octadecenoate + H(+). It carries out the reaction N,1-diacyl-sn-glycero-3-phosphoethanolamine + H2O = N-acyl-sn-glycero-3-phosphoethanolamine + a fatty acid + H(+). Lysophospholipase selective for N-acyl phosphatidylethanolamine (NAPE). Contributes to the biosynthesis of N-acyl ethanolamines, including the endocannabinoid anandamide by hydrolyzing the sn-1 and sn-2 acyl chains from N-acyl phosphatidylethanolamine (NAPE) generating glycerophospho-N-acyl ethanolamine (GP-NAE), an intermediate for N-acyl ethanolamine biosynthesis. Hydrolyzes substrates bearing saturated, monounsaturated, polyunsaturated N-acyl chains. Shows no significant activity towards other lysophospholipids, including lysophosphatidylcholine, lysophosphatidylethanolamine and lysophosphatidylserine. The protein is (Lyso)-N-acylphosphatidylethanolamine lipase of Homo sapiens (Human).